The following is a 384-amino-acid chain: Alpha-2B adrenergic receptor (384 aa).

The chain crosses the membrane as a helical span at residues 1 to 25; that stretch reads AIAAVTTFLILFTVFGNALVILAVL. Residues 26–36 are Cytoplasmic-facing; it reads TSRSLRAPQNL. A helical membrane pass occupies residues 37 to 62; it reads FLVSLAAADILVATLIXPFSLANELL. The Extracellular segment spans residues 63-72; the sequence is GYWYFWHTWC. An intrachain disulfide couples C72 to C151. The helical transmembrane segment at 73–95 threads the bilayer; it reads EVYLALXVLXCTSSIVHLCAISL. The Cytoplasmic portion of the chain corresponds to 96–117; that stretch reads DRYWAVSRALEYNSKRTPRRIX. The helical transmembrane segment at 118-140 threads the bilayer; it reads GIILTVWLIAAAISLPPLIYKGD. Residues 141 to 156 lie on the Extracellular side of the membrane; the sequence is QGPQPHGRPQCRLNQE. Residues 157-180 form a helical membrane-spanning segment; that stretch reads AWYILSSSIGSFFAPCLIMILVYL. The Cytoplasmic segment spans residues 181–348; the sequence is RIYLIAKRRN…LTREKRFTFV (168 aa). The interval 193–306 is disordered; that stretch reads GPRAQGASKG…SXGSPQLQQP (114 aa). The segment covering 288-306 has biased composition (low complexity); that stretch reads PEALPASPASXGSPQLQQP. Residues 349-372 form a helical membrane-spanning segment; sequence LAVVIGVXVLCWFPFFXSYSLGAI. Residues 373-381 are Extracellular-facing; sequence CPQHCTVXH. The chain crosses the membrane as a helical span at residues 382–384; sequence GLF.

The protein belongs to the G-protein coupled receptor 1 family. Adrenergic receptor subfamily. ADRA2B sub-subfamily. In terms of assembly, interacts with RAB26. Interacts with PPP1R9B. Interacts with GGA1, GGA2 and GGA3.

It is found in the cell membrane. Alpha-2 adrenergic receptors mediate the catecholamine-induced inhibition of adenylate cyclase through the action of G proteins. This chain is Alpha-2B adrenergic receptor (ADRA2B), found in Echinops telfairi (Lesser hedgehog tenrec).